Here is a 392-residue protein sequence, read N- to C-terminus: MAMPTIRHVRAFIVRGGGADYHDQPGGHWIDDHISTPMARYPEYRQSRQSFGINVLGTLVVEIEASDGTVGFAVTTGGEIGAFIVEKHLARFLEGQLVTDIEKMWDQMYFSTLYYGRKGVVLNTISGVDLALWDLLAKVRKEPVYQLLGGPVRDELVFYATGARPDLAKEMGFIGGKLPLQHGPAEGDAGLRQNLDKLAEMRSRVGDDFWLMYDCWMSLDVPYATRLAQAAHEYGLKWIEECLPPDDYWGYAELRRNVPRGMMVSTGEHEATRWGFRMLLEMQCCDLIQPDVGWCGGITELIKISALADAHNVMVVPHGSSVYSYHFVVTRHNSPFAEFLMMAPKADEVVPMFTPLLLDEPVPVNGRMKVPDAPGFGVRLNPECALVRPYAR.

Positions 22 and 48 each coordinate substrate. Positions 214, 240, and 268 each coordinate Mg(2+). The active-site Proton acceptor is His318. Glu338 is a binding site for substrate.

This sequence belongs to the mandelate racemase/muconate lactonizing enzyme family. RhamD subfamily. In terms of assembly, homooctamer; tetramer of dimers. It depends on Mg(2+) as a cofactor.

It carries out the reaction L-rhamnonate = 2-dehydro-3-deoxy-L-rhamnonate + H2O. Functionally, catalyzes the dehydration of L-rhamnonate to 2-keto-3-deoxy-L-rhamnonate (KDR). The chain is L-rhamnonate dehydratase from Paraburkholderia xenovorans (strain LB400).